The sequence spans 380 residues: Probable protein phosphatase 2C 2 (380 aa).

The PPM-type phosphatase domain occupies 69 to 339 (RSGSFADIGP…DNLTVIVICF (271 aa)). Residues Asp113, Gly114, Asp287, and Asp330 each coordinate Mn(2+).

Belongs to the PP2C family. Mg(2+) is required as a cofactor. The cofactor is Mn(2+).

The catalysed reaction is O-phospho-L-seryl-[protein] + H2O = L-seryl-[protein] + phosphate. The enzyme catalyses O-phospho-L-threonyl-[protein] + H2O = L-threonyl-[protein] + phosphate. In Oryza sativa subsp. japonica (Rice), this protein is Probable protein phosphatase 2C 2.